The following is a 112-amino-acid chain: Protein ORF3 (112 aa).

Hydrophobic regions lie at residues 7 to 23 (ALGL…LCCP) and 40 to 60 (AAVV…PIFI). The tract at residues 28 to 66 (VSRLAVAAGKRGAAVVSGVTGLILSPSPSPIFIQPTPSH) is interaction with host HPX. The interval 70–112 (QPPPGLELALGSQSVHSAPLGVTSPSAPPLPPVVDLPQLGLRR) is homodimerization, and interaction with host AMBP/bikunin. The tract at residues 89 to 112 (LGVTSPSAPPLPPVVDLPQLGLRR) is disordered. The interval 93-102 (SPSAPPLPPV) is interaction with host SRC, HCK, FYN, PIK3R3 and GRB2. A PTAP/PSAP motif motif is present at residues 94–97 (PSAP).

It belongs to the hepevirus ORF3 protein family. In terms of assembly, forms homooligomers. Interacts with host SRC, HCK, FYN, PIK3R3 and GRB2 (via SH3 domain); binding does not activate the kinases. Interacts with host AMBP/bikunin and AMBP/alpha-1-microglobulin peptides. Interacts with host HPX/hemopexin. Interacts (when phosphorylated) with capsid protein ORF2. Interacts with host TSG101; this interaction plays a role in viral release from the host cell. Interacts with host SIRPA; this interaction down-regulates the phosphorylation of host IRF3. Palmitoylated in the N-terminus.

It localises to the host endoplasmic reticulum membrane. It is found in the host cytoplasm. The protein resides in the host cytoskeleton. Its subcellular location is the virion. The protein localises to the host cell membrane. Small multifunctional phosphoprotein involved in virion morphogenesis, egress and counteracting host innate immunity. Plays critical roles in the final steps of viral release by interacting with host TSG101, a member of the vacuolar protein-sorting pathway and using other cellular host proteins involved in vesicle formation pathway. Also acts as a viroporin and forms ion conductive pores allowing viral particle release. Impairs the generation of type I interferon by down-regulating host TLR3 and TLR7 as well as their downstream signaling pathways. Down-regulates the phosphorylation of host IRF3 via the interaction with host SIRP-alpha, thereby inhibiting IFN-I expression. Interacts with host microtubules. This chain is Protein ORF3, found in Bandicota bengalensis (lesser bandicoot rat).